The sequence spans 355 residues: Ribosomal RNA small subunit methyltransferase H (355 aa).

Residues 47–49 (GGY), D65, F92, D113, and Q120 each bind S-adenosyl-L-methionine. Residues 332-355 (LLPLATLPETSHPKSASHSKSRRR) are disordered. Basic residues predominate over residues 346 to 355 (SASHSKSRRR).

This sequence belongs to the methyltransferase superfamily. RsmH family.

The protein resides in the cytoplasm. The enzyme catalyses cytidine(1402) in 16S rRNA + S-adenosyl-L-methionine = N(4)-methylcytidine(1402) in 16S rRNA + S-adenosyl-L-homocysteine + H(+). Functionally, specifically methylates the N4 position of cytidine in position 1402 (C1402) of 16S rRNA. The chain is Ribosomal RNA small subunit methyltransferase H from Beijerinckia indica subsp. indica (strain ATCC 9039 / DSM 1715 / NCIMB 8712).